The chain runs to 100 residues: MLEHALISGAYLFSIGIYGLITSRNMVRALMCLELILNAVNVNLVTFSNYFDSRQVKGDIFSIFVTAIAAAEAAIGLAIALAIYRNRKSTRIDQFNLSKW.

3 helical membrane-spanning segments follow: residues 1-21 (MLEHALISGAYLFSIGIYGLI), 29-49 (ALMCLELILNAVNVNLVTFSN), and 63-83 (IFVTAIAAAEAAIGLAIALAI).

The protein belongs to the complex I subunit 4L family. NDH is composed of at least 16 different subunits, 5 of which are encoded in the nucleus.

It localises to the plastid. Its subcellular location is the chloroplast thylakoid membrane. The catalysed reaction is a plastoquinone + NADH + (n+1) H(+)(in) = a plastoquinol + NAD(+) + n H(+)(out). It catalyses the reaction a plastoquinone + NADPH + (n+1) H(+)(in) = a plastoquinol + NADP(+) + n H(+)(out). In terms of biological role, NDH shuttles electrons from NAD(P)H:plastoquinone, via FMN and iron-sulfur (Fe-S) centers, to quinones in the photosynthetic chain and possibly in a chloroplast respiratory chain. The immediate electron acceptor for the enzyme in this species is believed to be plastoquinone. Couples the redox reaction to proton translocation, and thus conserves the redox energy in a proton gradient. This is NAD(P)H-quinone oxidoreductase subunit 4L, chloroplastic from Cycas taitungensis (Prince sago).